Reading from the N-terminus, the 440-residue chain is MGGLRLLAVALTCCWWPQGSQGKTLRGSFSSTAAQDAQGQRIGHFEFHGDHALLCVRINNIAVAVGKEAKLYLFQAQEWLKLQQSSHGYSCSEKLSKAQLTMTMNQTEHNLTVSQIPSPQTWHVFYADKYTCQDDKENSQVEDIPFEMVLLNPDAEGNPFDHFSAGESGLHEFFFLLVLVYFVIACIYAQSLWQAIKKGGPMHMILKVLTTALLLQAGSALANYIHFSSYSKDGIGVPFMGSLAEFFDIASQIQMLYLLLSLCMGWTIVRMKKSQSRPLQWDSTPASTGIAVFIVMTQSVLLLWEQFEDISHHSYHSHHNLAGILLIVLRICLALSLGCGLYQIITVERSTLKREFYITFAKGCILWFLCHPVLACISVIFSDYQRDKVITIGVILCQSVSMVILYRLFLSHSLYWEVSSLSSVTLPLTISSGHKSRPHF.

An N-terminal signal peptide occupies residues 1-22; the sequence is MGGLRLLAVALTCCWWPQGSQG. N-linked (GlcNAc...) asparagine glycans are attached at residues Asn-105 and Asn-110. Helical transmembrane passes span 173–193, 202–222, 249–269, 284–304, 321–341, 360–380, and 389–409; these read FFFL…QSLW, MHMI…SALA, IASQ…WTIV, TPAS…LLLW, LAGI…GCGL, FAKG…ISVI, and VITI…YRLF.

The protein localises to the membrane. The polypeptide is Integral membrane protein GPR180 (GPR180) (Homo sapiens (Human)).